The primary structure comprises 153 residues: Aspartate carbamoyltransferase regulatory chain (153 aa).

Residues Cys-109, Cys-114, Cys-138, and Cys-141 each contribute to the Zn(2+) site.

It belongs to the PyrI family. As to quaternary structure, contains catalytic and regulatory chains. Zn(2+) is required as a cofactor.

In terms of biological role, involved in allosteric regulation of aspartate carbamoyltransferase. This chain is Aspartate carbamoyltransferase regulatory chain, found in Vibrio vulnificus (strain CMCP6).